The chain runs to 715 residues: MSQHIRKLDSDVSERLKSQACTVSLASAVREIVQNSVDAHATTIDVMIDLPNLSFAVYDDGIGLTRSDLNILATQNYTSKIRKMNDLVTMKTYGYRGDALYSISNVSNLFVCSKKKDYNSAWMRKFPSKSVMLSENTILPIDPFWKICPWSRTKSGTVVIVEDMLYNLPVRRRILKEEPPFKTFNTIKADMLQILVMHPMISLNVQYTDKLRINTEVLFRSKNITEGLTKHQQMSQVLRNVFGAIIPPDMLKKVSLKFNEYQIEGIISKMPVGLKDLQFIYINGRRYADSAFQGYVDSLFQAQDFGEKGMSLLKTKSVGKPYRSHPVFILDVRCPQTIDDLLQDPAKKIVKPSHIRTIEPLIVKTIRSFLTFQGYLTPDKSDSSFEIVNCSQKTATLPDSRIQISKRNQVLNSKMKIARINSYIGKPAVNGCRINNSTINYEKIKNIRIDGQKSRLRNKLSSRPYDSGFTEDYDSIGKTITDFSISRSVLAKYEVINQVDKKFILIRCLDQSIHNCPLLVLVDQHACDERIRLEELFYSLLTEVVTGTFVARDLKDCCIEVDRTEADLFKHYQSEFKKWGIGYETIEGTMETSLLEIKTLPEMLTSKYNGDKDYLKMVLLQHAHDLKDFKKLPMDLSHFENYTSVDKLYWWKYSSCVPTVFHEILNSKACRSAVMFGDELTRQECIILISKLSRCHNPFECAHGRPSMVPIAELK.

Belongs to the DNA mismatch repair MutL/HexB family. Heterodimer of MLH1 and MLH3, called MutLbeta, which is involved in correction of a specific subset of IDLs when associated with MutSbeta. Forms a ternary complex with a SGS1-TOP3 heterodimer during meiosis.

The protein localises to the nucleus. Involved in DNA mismatch repair (MMR), correcting insertion-deletion loops (IDLs) resulting from DNA replication, DNA damage or from recombination events between non-identical sequences during meiosis. Component of the MutLbeta heterodimer, which probably forms a ternary complex with the MutSbeta heterodimer that initially recognizes the DNA mismatches. This complex is thought to be responsible for directing the downstream MMR events, including strand discrimination, excision, and resynthesis. Plays a major role in promoting meiotic crossing-over and is involved in maintaining the genetic stability of simple sequence repeats by correction of frameshift intermediates. The protein is DNA mismatch repair protein MLH3 (MLH3) of Saccharomyces cerevisiae (strain ATCC 204508 / S288c) (Baker's yeast).